The sequence spans 388 residues: Phosphopentomutase (388 aa).

Mn(2+) contacts are provided by D9, D283, H288, D324, H325, and H336.

This sequence belongs to the phosphopentomutase family. Requires Mn(2+) as cofactor.

It is found in the cytoplasm. The enzyme catalyses 2-deoxy-alpha-D-ribose 1-phosphate = 2-deoxy-D-ribose 5-phosphate. It catalyses the reaction alpha-D-ribose 1-phosphate = D-ribose 5-phosphate. It functions in the pathway carbohydrate degradation; 2-deoxy-D-ribose 1-phosphate degradation; D-glyceraldehyde 3-phosphate and acetaldehyde from 2-deoxy-alpha-D-ribose 1-phosphate: step 1/2. In terms of biological role, isomerase that catalyzes the conversion of deoxy-ribose 1-phosphate (dRib-1-P) and ribose 1-phosphate (Rib-1-P) to deoxy-ribose 5-phosphate (dRib-5-P) and ribose 5-phosphate (Rib-5-P), respectively. The sequence is that of Phosphopentomutase from Deinococcus radiodurans (strain ATCC 13939 / DSM 20539 / JCM 16871 / CCUG 27074 / LMG 4051 / NBRC 15346 / NCIMB 9279 / VKM B-1422 / R1).